Reading from the N-terminus, the 428-residue chain is Histidine--tRNA ligase (428 aa).

Belongs to the class-II aminoacyl-tRNA synthetase family. In terms of assembly, homodimer.

The protein localises to the cytoplasm. The enzyme catalyses tRNA(His) + L-histidine + ATP = L-histidyl-tRNA(His) + AMP + diphosphate + H(+). This is Histidine--tRNA ligase from Chlamydia trachomatis serovar L2 (strain ATCC VR-902B / DSM 19102 / 434/Bu).